A 266-amino-acid chain; its full sequence is DNA damage-regulated autophagy modulator protein 2 (266 aa).

6 helical membrane passes run 8–28 (LSFL…FSYI), 53–73 (KCLF…TIYV), 92–112 (NKAG…VANF), 117–137 (FFAV…LYMF), 160–180 (LLLV…SSLL), and 207–227 (ITTA…LTYI).

This sequence belongs to the DRAM/TMEM150 family.

It is found in the lysosome membrane. The protein localises to the photoreceptor inner segment. It localises to the apical cell membrane. Its function is as follows. Plays a role in the initiation of autophagy. In the retina, might be involved in the process of photoreceptor cells renewal and recycling to preserve visual function. Induces apoptotic cell death when coexpressed with DRAM1. This chain is DNA damage-regulated autophagy modulator protein 2 (DRAM2), found in Bos taurus (Bovine).